The sequence spans 83 residues: Exodeoxyribonuclease 7 small subunit (83 aa).

It belongs to the XseB family. Heterooligomer composed of large and small subunits.

The protein localises to the cytoplasm. It carries out the reaction Exonucleolytic cleavage in either 5'- to 3'- or 3'- to 5'-direction to yield nucleoside 5'-phosphates.. In terms of biological role, bidirectionally degrades single-stranded DNA into large acid-insoluble oligonucleotides, which are then degraded further into small acid-soluble oligonucleotides. The chain is Exodeoxyribonuclease 7 small subunit from Rhizobium leguminosarum bv. trifolii (strain WSM2304).